We begin with the raw amino-acid sequence, 133 residues long: Small ribosomal subunit protein uS11 (133 aa).

Residues Met1–Gly23 form a disordered region. Over residues Gly7–Lys17 the composition is skewed to basic residues.

It belongs to the universal ribosomal protein uS11 family. Part of the 30S ribosomal subunit. Interacts with proteins S7 and S18. Binds to IF-3.

Functionally, located on the platform of the 30S subunit, it bridges several disparate RNA helices of the 16S rRNA. Forms part of the Shine-Dalgarno cleft in the 70S ribosome. The sequence is that of Small ribosomal subunit protein uS11 from Arthrobacter sp. (strain FB24).